The primary structure comprises 296 residues: PYK10-binding protein 2 (296 aa).

The disordered stretch occupies residues 1-20; that stretch reads MAQKVEAKGGKGGNQWDDGS. Ala-2 is subject to N-acetylalanine. Jacalin-type lectin domains follow at residues 2–142 and 150–293; these read AQKV…YFAP and AKPL…HVRP.

It belongs to the jacalin lectin family. In terms of assembly, component of the PYK10 complex, at least composed of PYK10/BGLU23, BGLU21, BGLU22, JAL22, JAL23, PBP1/JAL30, PBP2/JAL31, JAL32, JAL33, JAL34, JAL35, GLL22 and GLL23.

Functionally, polymerizer-type lectin that may facilitate the correct polymerization of BGLU23/PYK10 upon tissue damage. Activates BGLU21, BGLU22 and BGLU23. This chain is PYK10-binding protein 2 (PBP2), found in Arabidopsis thaliana (Mouse-ear cress).